A 280-amino-acid chain; its full sequence is Phosphatidylserine decarboxylase proenzyme (280 aa).

Catalysis depends on charge relay system; for autoendoproteolytic cleavage activity residues Asp-88, His-145, and Ser-249. Ser-249 serves as the catalytic Schiff-base intermediate with substrate; via pyruvic acid; for decarboxylase activity. Ser-249 carries the post-translational modification Pyruvic acid (Ser); by autocatalysis.

Belongs to the phosphatidylserine decarboxylase family. PSD-B subfamily. Prokaryotic type I sub-subfamily. As to quaternary structure, heterodimer of a large membrane-associated beta subunit and a small pyruvoyl-containing alpha subunit. The cofactor is pyruvate. In terms of processing, is synthesized initially as an inactive proenzyme. Formation of the active enzyme involves a self-maturation process in which the active site pyruvoyl group is generated from an internal serine residue via an autocatalytic post-translational modification. Two non-identical subunits are generated from the proenzyme in this reaction, and the pyruvate is formed at the N-terminus of the alpha chain, which is derived from the carboxyl end of the proenzyme. The autoendoproteolytic cleavage occurs by a canonical serine protease mechanism, in which the side chain hydroxyl group of the serine supplies its oxygen atom to form the C-terminus of the beta chain, while the remainder of the serine residue undergoes an oxidative deamination to produce ammonia and the pyruvoyl prosthetic group on the alpha chain. During this reaction, the Ser that is part of the protease active site of the proenzyme becomes the pyruvoyl prosthetic group, which constitutes an essential element of the active site of the mature decarboxylase.

The protein resides in the cell membrane. It catalyses the reaction a 1,2-diacyl-sn-glycero-3-phospho-L-serine + H(+) = a 1,2-diacyl-sn-glycero-3-phosphoethanolamine + CO2. The protein operates within phospholipid metabolism; phosphatidylethanolamine biosynthesis; phosphatidylethanolamine from CDP-diacylglycerol: step 2/2. Catalyzes the formation of phosphatidylethanolamine (PtdEtn) from phosphatidylserine (PtdSer). The protein is Phosphatidylserine decarboxylase proenzyme of Chromobacterium violaceum (strain ATCC 12472 / DSM 30191 / JCM 1249 / CCUG 213 / NBRC 12614 / NCIMB 9131 / NCTC 9757 / MK).